The primary structure comprises 795 residues: Serine/threonine-protein kinase MARK1 (795 aa).

The interval 1-41 (MSARTPLPTVNERDTENHTSVDGYTETHIPPAKSSSRQNLP) is disordered. A Phosphothreonine modification is found at threonine 5. The region spanning 60-311 (YRLQKTIGKG…LEQIMKDRWM (252 aa)) is the Protein kinase domain. ATP contacts are provided by residues 66–74 (IGKGNFAKV) and lysine 89. Catalysis depends on aspartate 182, which acts as the Proton acceptor. Residue threonine 208 is modified to Phosphothreonine. Threonine 215 carries the phosphothreonine; by LKB1 and TAOK1 modification. Serine 219 is modified (phosphoserine; by GSK3-beta). A UBA domain is found at 329–370 (DLSDAKRIDIMVTMGFARDEINDALVSQKYDEVMATYILLGR). Disordered regions lie at residues 377–498 (GGES…SGGS) and 518–699 (QNGR…KPRS). Phosphoserine occurs at positions 382, 390, 393, 403, 423, and 444. Polar residues predominate over residues 387 to 403 (CQRSRPSSDLNNSTLQS). A compositionally biased stretch (basic and acidic residues) spans 447 to 459 (SEQKEEWGKDTAR). The span at 462–473 (GSTTVGSKSEVT) shows a compositional bias: polar residues. Serine 475 bears the Phosphoserine mark. Positions 486–495 (TASPSNNVYS) are enriched in polar residues. Low complexity-rich tracts occupy residues 523 to 547 (SSLT…GPSA) and 585 to 599 (PAAS…ASTP). Phosphoserine is present on serine 588. Residue threonine 613 is modified to Phosphothreonine; by PKC/PRKCZ. Polar residues predominate over residues 647–657 (GTSTGIISKIT). Composition is skewed to basic and acidic residues over residues 661 to 676 (VRRD…RADT) and 683 to 697 (DPKE…EAKP). At serine 666 the chain carries Phosphoserine. The region spanning 746 to 795 (DARQDSLVQWEMEVCKLPRLSLNGVRFKRISGTSIAFKNIASKIANELKL) is the KA1 domain.

The protein belongs to the protein kinase superfamily. CAMK Ser/Thr protein kinase family. SNF1 subfamily. Interacts with MAPT/TAU. It depends on Mg(2+) as a cofactor. Phosphorylated at Thr-215 by STK11/LKB1 in complex with STE20-related adapter-alpha (STRADA) pseudo kinase and CAB39. Phosphorylation at Thr-215 by TAOK1 activates the kinase activity, leading to phosphorylation and detachment of MAPT/TAU from microtubules. Phosphorylation at Ser-219 by GSK3-beta (GSK3B) inhibits the kinase activity. Phosphorylation at Thr-613 by PRKCZ/aPKC in polarized epithelial cells inhibits the kinase activity.

It is found in the cell membrane. The protein localises to the cytoplasm. The protein resides in the cytoskeleton. It localises to the cell projection. Its subcellular location is the dendrite. The catalysed reaction is L-seryl-[protein] + ATP = O-phospho-L-seryl-[protein] + ADP + H(+). It carries out the reaction L-threonyl-[protein] + ATP = O-phospho-L-threonyl-[protein] + ADP + H(+). The enzyme catalyses L-seryl-[tau protein] + ATP = O-phospho-L-seryl-[tau protein] + ADP + H(+). It catalyses the reaction L-threonyl-[tau protein] + ATP = O-phospho-L-threonyl-[tau protein] + ADP + H(+). Inhibited by phosphorylation at Ser-219. Activated by phosphorylation on Thr-215. Functionally, serine/threonine-protein kinase. Involved in cell polarity and microtubule dynamics regulation. Phosphorylates DCX, MAP2 and MAP4. Phosphorylates the microtubule-associated protein MAPT/TAU. Involved in cell polarity by phosphorylating the microtubule-associated proteins MAP2, MAP4 and MAPT/TAU at KXGS motifs, causing detachment from microtubules, and their disassembly. Involved in the regulation of neuronal migration through its dual activities in regulating cellular polarity and microtubule dynamics, possibly by phosphorylating and regulating DCX. Also acts as a positive regulator of the Wnt signaling pathway, probably by mediating phosphorylation of dishevelled proteins (DVL1, DVL2 and/or DVL3). The sequence is that of Serine/threonine-protein kinase MARK1 from Mus musculus (Mouse).